Here is a 345-residue protein sequence, read N- to C-terminus: Beta-2-glycoprotein 1 (345 aa).

The first 19 residues, 1–19 (MVSPVLALFSAFLCHVAIA), serve as a signal peptide directing secretion. Sushi domains follow at residues 21 to 81 (RICP…RCVP), 82 to 139 (RVCP…ACAR), 140 to 202 (ITCP…ECLE), and 203 to 262 (VKCP…TCRE). 11 cysteine pairs are disulfide-bonded: C23–C66, C51–C79, C84–C124, C110–C137, C142–C188, C174–C200, C205–C248, C234–C260, C264–C315, C300–C325, and C307–C345. O-linked (GalNAc...) threonine glycosylation is present at T33. 5 N-linked (GlcNAc...) asparagine glycosylation sites follow: N105, N117, N162, N183, and N193. The interval 263–345 (SCKLPVKKAT…KTDASELTPC (83 aa)) is sushi-like.

Expressed by the liver and secreted in plasma.

The protein resides in the secreted. Binds to various kinds of negatively charged substances such as heparin, phospholipids, and dextran sulfate. May prevent activation of the intrinsic blood coagulation cascade by binding to phospholipids on the surface of damaged cells. The chain is Beta-2-glycoprotein 1 (Apoh) from Mus musculus (Mouse).